The following is a 172-amino-acid chain: L-2,4-diaminobutyric acid acetyltransferase (172 aa).

Residues I11 to G165 enclose the N-acetyltransferase domain.

Belongs to the acetyltransferase family. EctA subfamily. In terms of assembly, homodimer.

The catalysed reaction is L-2,4-diaminobutanoate + acetyl-CoA = (2S)-4-acetamido-2-aminobutanoate + CoA + H(+). It functions in the pathway amine and polyamine biosynthesis; ectoine biosynthesis; L-ectoine from L-aspartate 4-semialdehyde: step 2/3. Its activity is regulated as follows. Inhibited by zinc and cadmium. Functionally, catalyzes the acetylation of L-2,4-diaminobutyrate (DABA) to gamma-N-acetyl-alpha,gamma-diaminobutyric acid (ADABA) with acetyl coenzyme A. The chain is L-2,4-diaminobutyric acid acetyltransferase (ectA) from Methylotuvimicrobium alcaliphilum (strain DSM 19304 / NCIMB 14124 / VKM B-2133 / 20Z) (Methylomicrobium alcaliphilum).